The sequence spans 137 residues: Small ribosomal subunit protein bS16 (137 aa).

Belongs to the bacterial ribosomal protein bS16 family.

This chain is Small ribosomal subunit protein bS16, found in Leuconostoc citreum (strain KM20).